Reading from the N-terminus, the 342-residue chain is Sesquiterpene synthase MBR_09977 (342 aa).

Mg(2+) is bound by residues D91 and D96. Residues 91–96 (DDLFVD) carry the DDXXXD motif motif. R184 contributes to the substrate binding site. Mg(2+)-binding residues include N230, S234, and E238.

This sequence belongs to the terpene synthase family. It depends on Mg(2+) as a cofactor.

The catalysed reaction is (2E,6E)-farnesyl diphosphate + H2O = (+)-corvol ether B + diphosphate. It carries out the reaction (2E,6E)-farnesyl diphosphate + H2O = (+)-corvol ether A + diphosphate. Functionally, terpene synthase that catalyzes the conversion of (2E,6E)-farnesyl diphosphate (FPP) into sesquiterpenes which are important for fungi-environment interactions. Produces a mixture consisting of 8 sesquiterpenes including corvol ethers A and B, as well as traces of epizonarene, gamma-cadinene, delta-cadinene, alpha-cadinene, alpha-cadinol, and an unidentified sesquiterpene. The major product is corvol ether A. The polypeptide is Sesquiterpene synthase MBR_09977 (Metarhizium brunneum (strain ARSEF 3297)).